Here is a 300-residue protein sequence, read N- to C-terminus: Ribosomal RNA small subunit methyltransferase H (300 aa).

S-adenosyl-L-methionine-binding positions include 35–37 (GGH), Asp55, Phe82, Asp100, and Gln107.

The protein belongs to the methyltransferase superfamily. RsmH family.

It localises to the cytoplasm. The enzyme catalyses cytidine(1402) in 16S rRNA + S-adenosyl-L-methionine = N(4)-methylcytidine(1402) in 16S rRNA + S-adenosyl-L-homocysteine + H(+). In terms of biological role, specifically methylates the N4 position of cytidine in position 1402 (C1402) of 16S rRNA. This is Ribosomal RNA small subunit methyltransferase H from Chlamydia trachomatis serovar L2 (strain ATCC VR-902B / DSM 19102 / 434/Bu).